A 582-amino-acid polypeptide reads, in one-letter code: Solute carrier family 15 member 3 (582 aa).

Residues M1–V20 are disordered. 4 helical membrane passes run T33–T53, L77–Y97, L102–I122, and P155–V175. N-linked (GlcNAc...) asparagine glycosylation is present at N178. The helical transmembrane segment at W201–E221 threads the bilayer. N223 is a glycosylation site (N-linked (GlcNAc...) asparagine). The next 2 membrane-spanning stretches (helical) occupy residues I232–I252 and F312–Y332. A glycan (N-linked (GlcNAc...) asparagine) is linked at N357. 2 helical membrane-spanning segments follow: residues I371–K391 and L409–L429. A glycan (N-linked (GlcNAc...) asparagine) is linked at N440. 3 consecutive transmembrane segments (helical) span residues Y466–Y485, G498–L518, and L541–A561. A glycan (N-linked (GlcNAc...) asparagine) is linked at N575.

It belongs to the major facilitator superfamily. Proton-dependent oligopeptide transporter (POT/PTR) (TC 2.A.17) family. As to expression, abundant expression in lung, spleen and thymus, and detected faintly in brain, liver, adrenal gland and heart at protein level.

It is found in the lysosome membrane. It localises to the endosome membrane. It catalyses the reaction N-acetyl-D-muramoyl-L-alanyl-D-isoglutamine(out) + n H(+)(out) = N-acetyl-D-muramoyl-L-alanyl-D-isoglutamine(in) + n H(+)(in). The catalysed reaction is glycylglycylglycine(out) + n H(+)(out) = glycylglycylglycine(in) + n H(+)(in). The enzyme catalyses carnosine(out) + n H(+)(out) = carnosine(in) + n H(+)(in). It carries out the reaction L-histidine(out) + n H(+)(out) = L-histidine(in) + n H(+)(in). Proton-coupled amino-acid transporter that transports free histidine and certain di- and tripeptides, and is involved in innate immune response. Also able to transport carnosine. Involved in the detection of microbial pathogens by toll-like receptors (TLRs) and NOD-like receptors (NLRs), probably by mediating transport of bacterial peptidoglycans across the endolysosomal membrane: catalyzes the transport of certain bacterial peptidoglycans, such as muramyl dipeptide (MDP), the NOD2 ligand. In Rattus norvegicus (Rat), this protein is Solute carrier family 15 member 3 (Slc15a3).